We begin with the raw amino-acid sequence, 301 residues long: Homoserine O-acetyltransferase (301 aa).

Residue C142 is the Acyl-thioester intermediate of the active site. Residues K163 and S192 each contribute to the substrate site. H235 (proton acceptor) is an active-site residue. The active site involves E237. R249 is a binding site for substrate.

This sequence belongs to the MetA family.

It is found in the cytoplasm. The catalysed reaction is L-homoserine + acetyl-CoA = O-acetyl-L-homoserine + CoA. Its pathway is amino-acid biosynthesis; L-methionine biosynthesis via de novo pathway; O-acetyl-L-homoserine from L-homoserine: step 1/1. Transfers an acetyl group from acetyl-CoA to L-homoserine, forming acetyl-L-homoserine. This is Homoserine O-acetyltransferase from Bacillus cereus (strain B4264).